A 249-amino-acid chain; its full sequence is DNA repair protein RecO (249 aa).

It belongs to the RecO family.

Functionally, involved in DNA repair and RecF pathway recombination. This Rhodopseudomonas palustris (strain HaA2) protein is DNA repair protein RecO.